A 476-amino-acid chain; its full sequence is DnaJ protein P58IPK homolog A (476 aa).

The N-terminal stretch at 1 to 28 (MVAMARWPWRVLLPLLLLHSSPVFFVFA) is a signal peptide. TPR repeat units lie at residues 36–69 (PSTLFKRALEMMNLRKYDGSLGLLNAVLEVEPNH), 70–103 (SEAYRQRASVLRHKCRYKEAEGDYSKYLELKPGS), 116–150 (AQNALESAYGQFESHDFSKVLDYINKIVLVFSPDC), 152–184 (KAKLLKAKALLALKDYSTVISETGFILKEDEDN), 185–218 (LDALLLRGRAYYYLADHDVASRHYQKGLRLDPEH), 231–264 (LVKKTKSAEDNAAKGKLRVSAEDYKASLAMDPDH), 269–302 (VHLYLGLCKVLVKLGRGKEAISSCTEALNIDGEL), and 304–336 (DALTQRGEAKLLTEDWEGAVQDLKEAAQKSPQD). The J domain occupies 357–423 (DWYKILGISK…DKRVRYDRGE (67 aa)).

As to quaternary structure, interacts with BIP1.

It is found in the endoplasmic reticulum lumen. May play a role in protein folding in the endoplasmic reticulum. The polypeptide is DnaJ protein P58IPK homolog A (Oryza sativa subsp. japonica (Rice)).